We begin with the raw amino-acid sequence, 244 residues long: Uridylate kinase (244 aa).

An ATP-binding site is contributed by 16 to 19 (KLSG). Position 58 (G58) interacts with UMP. Positions 59 and 63 each coordinate ATP. UMP-binding positions include D78 and 139-146 (VGAPYFTT). ATP-binding residues include T166, Y172, and D175.

Belongs to the UMP kinase family. As to quaternary structure, homohexamer.

It localises to the cytoplasm. It catalyses the reaction UMP + ATP = UDP + ADP. The protein operates within pyrimidine metabolism; CTP biosynthesis via de novo pathway; UDP from UMP (UMPK route): step 1/1. Its activity is regulated as follows. Inhibited by UTP. In terms of biological role, catalyzes the reversible phosphorylation of UMP to UDP. The protein is Uridylate kinase of Novosphingobium aromaticivorans (strain ATCC 700278 / DSM 12444 / CCUG 56034 / CIP 105152 / NBRC 16084 / F199).